Reading from the N-terminus, the 144-residue chain is Deoxyuridine 5'-triphosphate nucleotidohydrolase (144 aa).

Residues 63–65 (RSG), asparagine 76, and 80–82 (TVD) contribute to the substrate site.

It belongs to the dUTPase family. Mg(2+) serves as cofactor.

The catalysed reaction is dUTP + H2O = dUMP + diphosphate + H(+). It functions in the pathway pyrimidine metabolism; dUMP biosynthesis; dUMP from dCTP (dUTP route): step 2/2. In terms of biological role, this enzyme is involved in nucleotide metabolism: it produces dUMP, the immediate precursor of thymidine nucleotides and it decreases the intracellular concentration of dUTP so that uracil cannot be incorporated into DNA. This chain is Deoxyuridine 5'-triphosphate nucleotidohydrolase, found in Treponema denticola (strain ATCC 35405 / DSM 14222 / CIP 103919 / JCM 8153 / KCTC 15104).